Here is a 400-residue protein sequence, read N- to C-terminus: Lysophospholipid transporter LplT (400 aa).

A run of 12 helical transmembrane segments spans residues 19–39 (VIVAQFLSAFGDNALLFATLA), 53–73 (VLQMVFVGAYILFAPFVGQIA), 91–111 (AGAAGICLGVNPFVGYTLVGI), 139–159 (LMEASTIAAILLGSVAGGVLA), 164–184 (IAALVACALAYAGAVAANLFI), 195–213 (SWRLSAMTRSFFSACVVLW), 227–247 (LFWGAGVTLRFLLVLWVPVAL), 257–277 (YLNAMVAVGIVVGAGAAAKLV), 281–301 (TVSRCMPAGILIGVVVAIFSL), 304–324 (ALLPAYALLLLIGMLGGFFVV), 352–372 (NSAMLLMLGLYSLAVLVGVPA), and 373–393 (VAIGIGFGVLFALAIAALWIW).

This sequence belongs to the major facilitator superfamily. LplT (TC 2.A.1.42) family.

The protein localises to the cell inner membrane. In terms of biological role, catalyzes the facilitated diffusion of 2-acyl-glycero-3-phosphoethanolamine (2-acyl-GPE) into the cell. This is Lysophospholipid transporter LplT from Salmonella agona (strain SL483).